The chain runs to 243 residues: NEDD4-binding protein 2-like 1 (243 aa).

The tract at residues methionine 1–histidine 38 is disordered.

In terms of assembly, interacts with dynactin subunit proteins, including DCTN4, DCTN5 and DCTN5.

In terms of biological role, might play a role in adipocyte differentiation and triglyceride accumulation. In Homo sapiens (Human), this protein is NEDD4-binding protein 2-like 1 (N4BP2L1).